Reading from the N-terminus, the 105-residue chain is NADH-quinone oxidoreductase subunit K (105 aa).

3 helical membrane passes run 8–28 (LAAY…GVFL), 34–54 (IILL…LVAF), and 65–85 (VFVF…LAIL).

It belongs to the complex I subunit 4L family. NDH-1 is composed of 14 different subunits. Subunits NuoA, H, J, K, L, M, N constitute the membrane sector of the complex.

It localises to the cell inner membrane. The enzyme catalyses a quinone + NADH + 5 H(+)(in) = a quinol + NAD(+) + 4 H(+)(out). In terms of biological role, NDH-1 shuttles electrons from NADH, via FMN and iron-sulfur (Fe-S) centers, to quinones in the respiratory chain. The immediate electron acceptor for the enzyme in this species is believed to be ubiquinone. Couples the redox reaction to proton translocation (for every two electrons transferred, four hydrogen ions are translocated across the cytoplasmic membrane), and thus conserves the redox energy in a proton gradient. The polypeptide is NADH-quinone oxidoreductase subunit K (Acidithiobacillus ferrooxidans (strain ATCC 23270 / DSM 14882 / CIP 104768 / NCIMB 8455) (Ferrobacillus ferrooxidans (strain ATCC 23270))).